We begin with the raw amino-acid sequence, 127 residues long: Glycine cleavage system H protein (127 aa).

The Lipoyl-binding domain maps to 24–105 (TLTVGVTDHA…AYAAWLFKLK (82 aa)). Lys65 bears the N6-lipoyllysine mark.

Belongs to the GcvH family. As to quaternary structure, the glycine cleavage system is composed of four proteins: P, T, L and H. It depends on (R)-lipoate as a cofactor.

Functionally, the glycine cleavage system catalyzes the degradation of glycine. The H protein shuttles the methylamine group of glycine from the P protein to the T protein. The protein is Glycine cleavage system H protein of Azoarcus sp. (strain BH72).